Reading from the N-terminus, the 119-residue chain is MRHRKSGVKLGRTGSHRKAMFQNMTNSLFEHELIKTTLPKAKELRRVAEPLITLAKEDSVANRRLAFSRMRNKNMVGKLFGTLAPRYQARPGGYIRIIKCGNRDGDNAPMAYVELVDRD.

It belongs to the bacterial ribosomal protein bL17 family. In terms of assembly, part of the 50S ribosomal subunit. Contacts protein L32.

The chain is Large ribosomal subunit protein bL17 from Psychrobacter sp. (strain PRwf-1).